The following is a 449-amino-acid chain: Putative BTB/POZ domain-containing protein L742 (449 aa).

The BTB domain occupies 79–148 (EDGYVYINIG…LTMSNQELSG (70 aa)).

This sequence belongs to the mimivirus BTB/WD family.

The protein is Putative BTB/POZ domain-containing protein L742 of Acanthamoeba polyphaga mimivirus (APMV).